The primary structure comprises 287 residues: Agamous-like MADS-box protein AGL53 (287 aa).

Positions 30-78 (STAKKTTNLSMREQTMFKKALELSTLCNIDVCVIYYGRDGKLIKTWPED) constitute an MADS-box domain. A disordered region spans residues 151 to 171 (EFGQTRAVSSTTNPLSPPPSL).

Interacts with MEE14/CBP1.

It localises to the nucleus. Probable transcription factor that may function in the maintenance of the proper function of the central cell in pollen tube attraction. The protein is Agamous-like MADS-box protein AGL53 of Arabidopsis thaliana (Mouse-ear cress).